A 225-amino-acid chain; its full sequence is Endoglucanase (225 aa).

The N-terminal stretch at 1 to 15 (MKVFVVLAAIVAIAN) is a signal peptide. Aspartate 29 (nucleophile) is an active-site residue. Disulfide bonds link cysteine 30–cysteine 152, cysteine 31–cysteine 66, cysteine 35–cysteine 103, cysteine 50–cysteine 74, cysteine 104–cysteine 219, cysteine 106–cysteine 209, and cysteine 176–cysteine 187. An N-linked (GlcNAc...) asparagine glycan is attached at asparagine 55. Aspartate 138 serves as the catalytic Proton donor.

This sequence belongs to the glycosyl hydrolase 45 (cellulase K) family. N- and O-glycosylated. Contains hybrid- and complex-type N-glycans.

It localises to the secreted. It carries out the reaction Endohydrolysis of (1-&gt;4)-beta-D-glucosidic linkages in cellulose, lichenin and cereal beta-D-glucans.. Its activity is regulated as follows. Activity is not affected by metal ions except Mn(2+), which reduces the activity by 40-50%. However, no significant change in activity in response to 1 mM EDTA. Hydrolyzes carboxymethylcellulose (CMC). Also hydrolyzes lichenan and barley beta-1,4-D-glucan. CMC is hydrolyzed majorily to cellobiose (G2), cellotriose (G3) and cellotetraose (G4). Cellohexaose (G6) is hydrolyzed to G4 and G2 with traces of G3. Cellopentaose (G5) is completely hydrolyzed to G2 and G3, and G4 is partially hydrolyzed to G2. Does not hydrolyze G2 or G3. Does not hydrolyze crystalline cellulose, soluble starch, xylan, mannan or laminarin. This chain is Endoglucanase, found in Cryptopygus antarcticus (Antarctic springtail).